The sequence spans 326 residues: Glutaredoxin 3 (326 aa).

The region spanning 1–108 (MANFTDAASL…LTNKVQRLGS (108 aa)) is the Thioredoxin domain. 2 consecutive Glutaredoxin domains span residues 125-227 (NQRL…VSLE) and 227-326 (ENRL…KGEN). [2Fe-2S] cluster is bound by residues C150 and C252.

Homodimer; the homodimer is independent of 2Fe-2S clusters. Heterotrimer; forms a heterotrimeric complex composed by two bola2 molecules and one glrx3 molecule; linked by [2Fe-2S] clusters.

Its subcellular location is the cytoplasm. It is found in the cytosol. In terms of biological role, together with bola2, acts as a cytosolic iron-sulfur (Fe-S) cluster assembly factor that facilitates [2Fe-2S] cluster insertion into a subset of cytosolic proteins. Required for hemoglobin maturation. Does not possess any thyoredoxin activity since it lacks the conserved motif that is essential for catalytic activity. The sequence is that of Glutaredoxin 3 (glrx3) from Danio rerio (Zebrafish).